A 105-amino-acid chain; its full sequence is Nucleoid-associated protein OCAR_7544/OCA5_c05960 (105 aa).

Belongs to the YbaB/EbfC family. As to quaternary structure, homodimer.

It is found in the cytoplasm. The protein resides in the nucleoid. Binds to DNA and alters its conformation. May be involved in regulation of gene expression, nucleoid organization and DNA protection. The protein is Nucleoid-associated protein OCAR_7544/OCA5_c05960 of Afipia carboxidovorans (strain ATCC 49405 / DSM 1227 / KCTC 32145 / OM5) (Oligotropha carboxidovorans).